Here is a 167-residue protein sequence, read N- to C-terminus: CASP-like protein UU1 (167 aa).

Topologically, residues 1-17 are cytoplasmic; the sequence is MVELESQEAVTVASTAD. A helical transmembrane segment spans residues 18 to 38; the sequence is IAVDVSLRLLAAATSLASAVV. The Extracellular segment spans residues 39-54; the sequence is VAANHQQRWGVRVDFT. Residues 55–75 form a helical membrane-spanning segment; it reads LFQVWIGFVAVNLVCTVYAAA. Over 76 to 94 the chain is Cytoplasmic; that stretch reads TAAAARKAMGRWWLHHADA. The helical transmembrane segment at 95–115 threads the bilayer; it reads VVVNLEAAATAGAGAIGSIAM. Topologically, residues 116-135 are extracellular; sequence WGNEASGWYAVCRLYRRYCN. The chain crosses the membrane as a helical span at residues 136–156; the sequence is AGAAALALSLAAVLLLGVACA. The Cytoplasmic portion of the chain corresponds to 157–167; the sequence is RSRYPKMPPTT.

It belongs to the Casparian strip membrane proteins (CASP) family. Homodimer and heterodimers.

The protein resides in the cell membrane. The chain is CASP-like protein UU1 from Oryza sativa subsp. indica (Rice).